The following is a 338-amino-acid chain: DNA-directed RNA polymerase subunit alpha (338 aa).

Residues 1 to 234 (MIERNWNELI…DQLQIFITFE (234 aa)) form an alpha N-terminal domain (alpha-NTD) region. Positions 250–338 (FNPALLKKVD…DLAKKFEDQI (89 aa)) are alpha C-terminal domain (alpha-CTD).

It belongs to the RNA polymerase alpha chain family. Homodimer. The RNAP catalytic core consists of 2 alpha, 1 beta, 1 beta' and 1 omega subunit. When a sigma factor is associated with the core the holoenzyme is formed, which can initiate transcription.

The catalysed reaction is RNA(n) + a ribonucleoside 5'-triphosphate = RNA(n+1) + diphosphate. DNA-dependent RNA polymerase catalyzes the transcription of DNA into RNA using the four ribonucleoside triphosphates as substrates. In Caulobacter sp. (strain K31), this protein is DNA-directed RNA polymerase subunit alpha.